The chain runs to 1294 residues: von Willebrand factor A domain-containing protein 3B (1294 aa).

The VWFA domain maps to 508–684 (CIYILIDTSH…EDLTLLVKEM (177 aa)). 4 disordered regions span residues 732 to 754 (CAKPQSDVDSTQTSSLNMLKGPW), 778 to 803 (RSQMSSLRSSACSERKDGLSNASSRR), 1012 to 1036 (APGEQQKLQGNPTKKTKSKRPDPLK), and 1193 to 1247 (DTQD…PRTA). Polar residues predominate over residues 738 to 748 (DVDSTQTSSLN). The span at 778–787 (RSQMSSLRSS) shows a compositional bias: low complexity. Basic and acidic residues predominate over residues 1193–1202 (DTQDSREPRR). The segment covering 1203–1212 (EKPRRKKRPA) has biased composition (basic residues). Over residues 1213–1236 (KQPLQQAAPSDSDGSSHGISSHGS) the composition is skewed to low complexity.

Its subcellular location is the cytoplasm. In Homo sapiens (Human), this protein is von Willebrand factor A domain-containing protein 3B (VWA3B).